Here is a 273-residue protein sequence, read N- to C-terminus: Undecaprenyl-diphosphatase (273 aa).

The next 7 helical transmembrane spans lie at 6–26 (SLLVAAILGVVEGLTEFLPVS), 45–65 (AKTFEVVIQLGSILAVVVMFW), 90–110 (LTLIHILLGMIPAVVLGLLFH), 116–136 (LFNPINVMYALVVGGLLLIAA), 190–210 (YAASEFSFLLAVPMMMGATAL), 222–242 (GDIPMFAVGFITAFVVALVAI), and 252–272 (ISFIPFAIYRFIVAAAVYVVF).

It belongs to the UppP family.

It is found in the cell inner membrane. The enzyme catalyses di-trans,octa-cis-undecaprenyl diphosphate + H2O = di-trans,octa-cis-undecaprenyl phosphate + phosphate + H(+). Catalyzes the dephosphorylation of undecaprenyl diphosphate (UPP). Confers resistance to bacitracin. In Escherichia fergusonii (strain ATCC 35469 / DSM 13698 / CCUG 18766 / IAM 14443 / JCM 21226 / LMG 7866 / NBRC 102419 / NCTC 12128 / CDC 0568-73), this protein is Undecaprenyl-diphosphatase.